The sequence spans 145 residues: 3-dehydroquinate dehydratase (145 aa).

Residue Y24 is the Proton acceptor of the active site. 3 residues coordinate substrate: N76, H82, and D89. The Proton donor role is filled by H102. Substrate is bound by residues 103 to 104 and R113; that span reads VS.

This sequence belongs to the type-II 3-dehydroquinase family. As to quaternary structure, homododecamer.

The catalysed reaction is 3-dehydroquinate = 3-dehydroshikimate + H2O. It participates in metabolic intermediate biosynthesis; chorismate biosynthesis; chorismate from D-erythrose 4-phosphate and phosphoenolpyruvate: step 3/7. Its function is as follows. Catalyzes a trans-dehydration via an enolate intermediate. The sequence is that of 3-dehydroquinate dehydratase from Janthinobacterium sp. (strain Marseille) (Minibacterium massiliensis).